Reading from the N-terminus, the 597-residue chain is C4b-binding protein alpha chain (597 aa).

The N-terminal stretch at 1 to 48 (MHPPKTPSGALHRKRKMAAWPFSRLWKVSDPILFQMTLIAALLPAVLG) is a signal peptide. 8 consecutive Sushi domains span residues 49–110 (NCGP…FCIY), 111–172 (KRCR…QCEI), 173–236 (VKCK…TCEK), 237–296 (ITCR…ACEP), 297–362 (NSCI…GCEA), 363–424 (LCCP…SCGD), 425–482 (ICNF…QCKA), and 483–540 (LCRK…KCEW). 16 disulfide bridges follow: Cys50–Cys96, Cys81–Cys108, Cys113–Cys154, Cys140–Cys170, Cys175–Cys217, Cys203–Cys234, Cys239–Cys281, Cys267–Cys294, Cys299–Cys348, Cys332–Cys360, Cys365–Cys409, Cys399–Cys422, Cys426–Cys468, Cys454–Cys480, Cys484–Cys525, and Cys511–Cys538. A glycan (N-linked (GlcNAc...) asparagine) is linked at Asn221. 2 N-linked (GlcNAc...) asparagine glycosylation sites follow: Asn506 and Asn528.

In terms of assembly, disulfide-linked complex of alpha and beta chains of 3 possible sorts: a 570 kDa complex of 7 alpha chains and 1 beta chain, a 530 kDa homoheptamer of alpha chains or a 500 kDa complex of 6 alpha chains and 1 beta chain. The central body of the alpha chain homomer supports tentacles, each with the binding site for C4b at the end. As to quaternary structure, (Microbial infection) Interacts with Staphylococcus aureus protein SdrE; this interaction inhibits complement-mediated bacterial opsonization. As to expression, chylomicrons in the plasma.

It is found in the secreted. In terms of biological role, controls the classical pathway of complement activation. It binds as a cofactor to C3b/C4b inactivator (C3bINA), which then hydrolyzes the complement fragment C4b. It also accelerates the degradation of the C4bC2a complex (C3 convertase) by dissociating the complement fragment C2a. Alpha chain binds C4b. It also interacts with anticoagulant protein S and with serum amyloid P component. This chain is C4b-binding protein alpha chain (C4BPA), found in Homo sapiens (Human).